The sequence spans 489 residues: Tyrosine-protein phosphatase MSG5 (489 aa).

A compositionally biased stretch (basic and acidic residues) spans 1–18 (MQFHSDKQHLDSKTDIDF). Residues 1–30 (MQFHSDKQHLDSKTDIDFKPNSPRSLQNRN) form a disordered region. 3 positions are modified to phosphoserine: S22, S98, and S151. A Phosphothreonine modification is found at T178. The 143-residue stretch at 233–375 (GPLLVLPPNL…LMEWGTMLSK (143 aa)) folds into the Tyrosine-protein phosphatase domain. The Phosphocysteine intermediate role is filled by C319. Disordered stretches follow at residues 375 to 401 (KNSP…VSST) and 419 to 489 (LSSS…MFLP). Residues 419-450 (LSSSPNDSSVNSSEVTPRTPATLTGARTALAT) are compositionally biased toward low complexity. Residues 451-460 (ERGEDDEHCK) are compositionally biased toward basic and acidic residues.

The protein belongs to the protein-tyrosine phosphatase family. Non-receptor class dual specificity subfamily.

It carries out the reaction O-phospho-L-tyrosyl-[protein] + H2O = L-tyrosyl-[protein] + phosphate. In terms of biological role, dual specificity phosphatase that dephosphorylates MAP kinase FUS3 on both a Tyr and a Ser or Thr. Has a role in adaptation to pheromone. In Saccharomyces cerevisiae (strain ATCC 204508 / S288c) (Baker's yeast), this protein is Tyrosine-protein phosphatase MSG5 (MSG5).